The sequence spans 433 residues: Pyrimidine-nucleoside phosphorylase (433 aa).

Lys81–Ser83 lines the phosphate pocket. K(+) is bound by residues Gly88 and Thr90. Phosphate-binding positions include Thr92, Lys108 to Ser110, and Thr120. Residues Arg168 and Lys187 each contribute to the substrate site. The K(+) site is built by Leu243, Ala246, and Glu255.

This sequence belongs to the thymidine/pyrimidine-nucleoside phosphorylase family. Homodimer. K(+) is required as a cofactor.

It catalyses the reaction uridine + phosphate = alpha-D-ribose 1-phosphate + uracil. The enzyme catalyses thymidine + phosphate = 2-deoxy-alpha-D-ribose 1-phosphate + thymine. It carries out the reaction 2'-deoxyuridine + phosphate = 2-deoxy-alpha-D-ribose 1-phosphate + uracil. Its function is as follows. Catalyzes phosphorolysis of the pyrimidine nucleosides uridine, thymidine and 2'-deoxyuridine with the formation of the corresponding pyrimidine base and ribose-1-phosphate. In Staphylococcus aureus (strain NCTC 8325 / PS 47), this protein is Pyrimidine-nucleoside phosphorylase (pdp).